A 93-amino-acid polypeptide reads, in one-letter code: Small ribosomal subunit protein uS19 (93 aa).

It belongs to the universal ribosomal protein uS19 family.

Its function is as follows. Protein S19 forms a complex with S13 that binds strongly to the 16S ribosomal RNA. This chain is Small ribosomal subunit protein uS19, found in Mycobacteroides abscessus (strain ATCC 19977 / DSM 44196 / CCUG 20993 / CIP 104536 / JCM 13569 / NCTC 13031 / TMC 1543 / L948) (Mycobacterium abscessus).